The following is a 215-amino-acid chain: Putative serine/threonine-protein kinase YrzF (215 aa).

One can recognise a Protein kinase domain in the interval Ser27–Ser215. ATP contacts are provided by residues Ile33–Val41 and Lys54. The active-site Proton acceptor is the Asp135.

This sequence belongs to the protein kinase superfamily. Ser/Thr protein kinase family.

It carries out the reaction L-seryl-[protein] + ATP = O-phospho-L-seryl-[protein] + ADP + H(+). It catalyses the reaction L-threonyl-[protein] + ATP = O-phospho-L-threonyl-[protein] + ADP + H(+). In Bacillus subtilis (strain 168), this protein is Putative serine/threonine-protein kinase YrzF (yrzF).